The following is a 411-amino-acid chain: MDAVILCAGKGTRLMPLTENIPKPMLPVGGAPILERIINKIDKLVENIYLIVKYEKEIIINHFKNNDKIKFIEQTDIDGTGYAVLMAKNHISGDFLVINGDIIFDDDLTNIVNDDVKNIITLNEVDNPSNFGVIVVDNQNNIIELQEKPKNPKSNLINAGIYKFENKIFDILETLRPSERGEVELTDAIKELIKENNIKGIKLNGYWNDIGKPWDLLDANTHILKNIKTDIKGKIGKNVVIEGAVIIEEGTEIKPNTVIEGPAIIKSGAIVGPLAHIRPNTVLMENTGVGNSSEIKGSIIMKNSKVPHLSYIGDSIIGENCNMGCNTITANLRFDNKPVMVNIKEEKVKSVRKFGAIIGHNVKTGIQVSFMPGVKIGSNSWIGANCLINNDIEKDSFVYKKEEIIIKTKRK.

The pyrophosphorylase stretch occupies residues 1–204; sequence MDAVILCAGK…ENNIKGIKLN (204 aa). Residues 6–9, Gln74, and Gly79 each bind UTP; that span reads LCAG. 4 residues coordinate N-acetyl-alpha-D-glucosamine 1-phosphate: Thr80, Gly132, Glu144, and Asn158. The tract at residues 205–224 is linker; it reads GYWNDIGKPWDLLDANTHIL. The segment at 225–411 is N-acetyltransferase; that stretch reads KNIKTDIKGK…EEIIIKTKRK (187 aa). His308 (proton acceptor) is an active-site residue. Acetyl-CoA is bound by residues Ala384 and Lys401.

This sequence in the N-terminal section; belongs to the N-acetylglucosamine-1-phosphate uridyltransferase family. The protein in the C-terminal section; belongs to the transferase hexapeptide repeat family.

It catalyses the reaction N-acetyl-alpha-D-glucosamine 1-phosphate + UTP + H(+) = UDP-N-acetyl-alpha-D-glucosamine + diphosphate. It carries out the reaction alpha-D-glucosamine 1-phosphate + acetyl-CoA = N-acetyl-alpha-D-glucosamine 1-phosphate + CoA + H(+). It functions in the pathway nucleotide-sugar biosynthesis; UDP-N-acetyl-alpha-D-glucosamine biosynthesis; N-acetyl-alpha-D-glucosamine 1-phosphate from alpha-D-glucosamine 6-phosphate (route II): step 2/2. Its pathway is nucleotide-sugar biosynthesis; UDP-N-acetyl-alpha-D-glucosamine biosynthesis; UDP-N-acetyl-alpha-D-glucosamine from N-acetyl-alpha-D-glucosamine 1-phosphate: step 1/1. Functionally, catalyzes the last two sequential reactions in the de novo biosynthetic pathway for UDP-N-acetyl-glucosamine (UDP-GlcNAc). Responsible for the acetylation of GlcN-1-P to GlcNAc-1-P, and for the uridyl transfer from UTP to GlcNAc-1-P, to produce UDP-GlcNAc and pyrophosphate. The sequence is that of Bifunctional protein GlmU from Methanococcus aeolicus (strain ATCC BAA-1280 / DSM 17508 / OCM 812 / Nankai-3).